Consider the following 96-residue polypeptide: uncharacterized protein (96 aa).

This is an uncharacterized protein from Escherichia coli (strain K12).